The sequence spans 251 residues: Segregation and condensation protein A (251 aa).

The protein belongs to the ScpA family. As to quaternary structure, component of a cohesin-like complex composed of ScpA, ScpB and the Smc homodimer, in which ScpA and ScpB bind to the head domain of Smc. The presence of the three proteins is required for the association of the complex with DNA.

Its subcellular location is the cytoplasm. Its function is as follows. Participates in chromosomal partition during cell division. May act via the formation of a condensin-like complex containing Smc and ScpB that pull DNA away from mid-cell into both cell halves. This chain is Segregation and condensation protein A, found in Bacillus licheniformis (strain ATCC 14580 / DSM 13 / JCM 2505 / CCUG 7422 / NBRC 12200 / NCIMB 9375 / NCTC 10341 / NRRL NRS-1264 / Gibson 46).